The chain runs to 54 residues: Light-harvesting protein B-880 beta chain (54 aa).

The Cytoplasmic segment spans residues Ala1–Ala20. Residues His19 and His37 each contribute to the a bacteriochlorophyll site. The chain crosses the membrane as a helical span at residues Leu21–Trp43. Residues Arg44–Ala54 are Periplasmic-facing.

This sequence belongs to the antenna complex beta subunit family. As to quaternary structure, the core complex is formed by different alpha and beta chains, binding bacteriochlorophyll molecules, and arranged most probably in tetrameric structures disposed around the reaction center. The non-pigmented gamma chains may constitute additional components.

Its subcellular location is the cell inner membrane. Its function is as follows. Antenna complexes are light-harvesting systems, which transfer the excitation energy to the reaction centers. This Rhodoblastus acidophilus (Rhodopseudomonas acidophila) protein is Light-harvesting protein B-880 beta chain.